A 191-amino-acid chain; its full sequence is Molybdenum cofactor guanylyltransferase (191 aa).

GTP is bound by residues 13–15 (LAG), Lys26, Asp72, and Asp102. Asp102 contacts Mg(2+).

Belongs to the MobA family. As to quaternary structure, monomer. It depends on Mg(2+) as a cofactor.

The protein resides in the cytoplasm. The catalysed reaction is Mo-molybdopterin + GTP + H(+) = Mo-molybdopterin guanine dinucleotide + diphosphate. In terms of biological role, transfers a GMP moiety from GTP to Mo-molybdopterin (Mo-MPT) cofactor (Moco or molybdenum cofactor) to form Mo-molybdopterin guanine dinucleotide (Mo-MGD) cofactor. This Pseudomonas entomophila (strain L48) protein is Molybdenum cofactor guanylyltransferase.